Reading from the N-terminus, the 455-residue chain is Hydroxymethylglutaryl-CoA synthase 2 (455 aa).

E86 serves as the catalytic Proton donor/acceptor. C120 (acyl-thioester intermediate) is an active-site residue. C120, T161, S211, H255, K264, N329, and S363 together coordinate (3S)-3-hydroxy-3-methylglutaryl-CoA. H255 serves as the catalytic Proton donor/acceptor.

Belongs to the thiolase-like superfamily. HMG-CoA synthase family.

It catalyses the reaction acetoacetyl-CoA + acetyl-CoA + H2O = (3S)-3-hydroxy-3-methylglutaryl-CoA + CoA + H(+). The protein operates within metabolic intermediate biosynthesis; (R)-mevalonate biosynthesis; (R)-mevalonate from acetyl-CoA: step 2/3. This enzyme condenses acetyl-CoA with acetoacetyl-CoA to form HMG-CoA, which is the substrate for HMG-CoA reductase. This chain is Hydroxymethylglutaryl-CoA synthase 2 (HMGCS-2), found in Blattella germanica (German cockroach).